Here is a 123-residue protein sequence, read N- to C-terminus: Small ribosomal subunit protein uS12 (123 aa).

The residue at position 89 (Asp89) is a 3-methylthioaspartic acid.

Belongs to the universal ribosomal protein uS12 family. In terms of assembly, part of the 30S ribosomal subunit. Contacts proteins S8 and S17. May interact with IF1 in the 30S initiation complex.

Functionally, with S4 and S5 plays an important role in translational accuracy. Interacts with and stabilizes bases of the 16S rRNA that are involved in tRNA selection in the A site and with the mRNA backbone. Located at the interface of the 30S and 50S subunits, it traverses the body of the 30S subunit contacting proteins on the other side and probably holding the rRNA structure together. The combined cluster of proteins S8, S12 and S17 appears to hold together the shoulder and platform of the 30S subunit. This Bartonella bacilliformis (strain ATCC 35685 / KC583 / Herrer 020/F12,63) protein is Small ribosomal subunit protein uS12.